A 126-amino-acid chain; its full sequence is Fluoride-specific ion channel FluC (126 aa).

The next 4 membrane-spanning stretches (helical) occupy residues 6–26, 36–56, 69–89, and 99–119; these read FLAV…LAIL, YGTL…VGFF, LVIT…GEVV, and IGVL…MLGF. The Na(+) site is built by Gly76 and Thr79.

This sequence belongs to the fluoride channel Fluc/FEX (TC 1.A.43) family.

Its subcellular location is the cell inner membrane. It catalyses the reaction fluoride(in) = fluoride(out). With respect to regulation, na(+) is not transported, but it plays an essential structural role and its presence is essential for fluoride channel function. Its function is as follows. Fluoride-specific ion channel. Important for reducing fluoride concentration in the cell, thus reducing its toxicity. The protein is Fluoride-specific ion channel FluC of Ralstonia pickettii (strain 12J).